The chain runs to 309 residues: Prepilin leader peptidase/N-methyltransferase (309 aa).

A helical transmembrane segment spans residues 35–55; that stretch reads MQLAFAIVLGLVVGSFINVVV. Residues cysteine 96, cysteine 99, cysteine 121, and cysteine 124 each coordinate Zn(2+). 6 helical membrane passes run 147-167, 183-203, 207-227, 230-250, 253-273, and 288-308; these read LALF…AALL, LTLP…FASL, VIGA…FKLL, IEGI…WLGW, LPQV…VATW, and FLAA…LLLG.

This sequence belongs to the peptidase A24 family. It depends on Zn(2+) as a cofactor.

The protein localises to the cell inner membrane. It catalyses the reaction Typically cleaves a -Gly-|-Phe- bond to release an N-terminal, basic peptide of 5-8 residues from type IV prepilin, and then N-methylates the new N-terminal amino group, the methyl donor being S-adenosyl-L-methionine.. In terms of biological role, plays an essential role in type IV pili and type II pseudopili formation by proteolytically removing the leader sequence from substrate proteins and subsequently monomethylating the alpha-amino group of the newly exposed N-terminal phenylalanine. This chain is Prepilin leader peptidase/N-methyltransferase (gspO), found in Burkholderia pseudomallei (strain K96243).